A 294-amino-acid polypeptide reads, in one-letter code: Glutamyl-Q tRNA(Asp) synthetase (294 aa).

Residues 7 to 11 (RFAPS) and glutamate 43 contribute to the L-glutamate site. A 'HIGH' region motif is present at residues 10–20 (PSPSGPLHFGS). 4 residues coordinate Zn(2+): cysteine 99, cysteine 101, tyrosine 113, and cysteine 117. Residues tyrosine 168 and arginine 186 each coordinate L-glutamate. The 'KMSKS' region motif lies at 224–228 (KLSKQ). An ATP-binding site is contributed by lysine 227.

The protein belongs to the class-I aminoacyl-tRNA synthetase family. GluQ subfamily. Zn(2+) is required as a cofactor.

Catalyzes the tRNA-independent activation of glutamate in presence of ATP and the subsequent transfer of glutamate onto a tRNA(Asp). Glutamate is transferred on the 2-amino-5-(4,5-dihydroxy-2-cyclopenten-1-yl) moiety of the queuosine in the wobble position of the QUC anticodon. This chain is Glutamyl-Q tRNA(Asp) synthetase, found in Vibrio parahaemolyticus serotype O3:K6 (strain RIMD 2210633).